Reading from the N-terminus, the 199-residue chain is Early nodulin-like protein 3 (199 aa).

An N-terminal signal peptide occupies residues 1–23; the sequence is MGLVMRFDLYLMFVMLMGLGFTI. Residues 27-128 enclose the Phytocyanin domain; that stretch reads YKFYVGGKDG…GQKLAVKVLS (102 aa). 2 N-linked (GlcNAc...) asparagine glycosylation sites follow: asparagine 57 and asparagine 83. The cysteines at positions 82 and 116 are disulfide-linked. A disordered region spans residues 130 to 180; sequence VHHSHSPRHTSPSPSPVHQELSSPGPSPGVEPSSDSNSRVPAPGPATAPNS. Positions 138 to 165 are enriched in low complexity; the sequence is HTSPSPSPVHQELSSPGPSPGVEPSSDS. The GPI-anchor amidated asparagine moiety is linked to residue asparagine 179. Residues 180–199 constitute a propeptide, removed in mature form; the sequence is SAGLVGPGMVVLVIMISSLF.

This sequence belongs to the early nodulin-like (ENODL) family. As to expression, confined to flowers.

The protein resides in the cell membrane. Functionally, may act as a carbohydrate transporter. This Arabidopsis thaliana (Mouse-ear cress) protein is Early nodulin-like protein 3.